The primary structure comprises 422 residues: UDP-N-acetylglucosamine 1-carboxyvinyltransferase (422 aa).

22–23 (KN) lines the phosphoenolpyruvate pocket. Residue Arg-93 coordinates UDP-N-acetyl-alpha-D-glucosamine. Cys-117 functions as the Proton donor in the catalytic mechanism. At Cys-117 the chain carries 2-(S-cysteinyl)pyruvic acid O-phosphothioketal. UDP-N-acetyl-alpha-D-glucosamine contacts are provided by residues 122-126 (RPVDL), Asp-308, and Leu-330.

It belongs to the EPSP synthase family. MurA subfamily.

The protein resides in the cytoplasm. It catalyses the reaction phosphoenolpyruvate + UDP-N-acetyl-alpha-D-glucosamine = UDP-N-acetyl-3-O-(1-carboxyvinyl)-alpha-D-glucosamine + phosphate. It functions in the pathway cell wall biogenesis; peptidoglycan biosynthesis. Functionally, cell wall formation. Adds enolpyruvyl to UDP-N-acetylglucosamine. The polypeptide is UDP-N-acetylglucosamine 1-carboxyvinyltransferase (Helicobacter pylori (strain Shi470)).